A 108-amino-acid polypeptide reads, in one-letter code: Circadian clock oscillator protein KaiB (108 aa).

The protein belongs to the KaiB family. Homodimer, interacts with KaiC. The KaiABC complex composition changes during the circadian cycle to control KaiC phosphorylation. Complexes KaiC(6), KaiA(2-4):KaiC(6), KaiB(6):KaiC(6) and KaiC(6):KaiB(6):KaiA(12) are among the most important forms, many form cooperatively. Undergoes a major conformational rearrangment; in the free state forms homotetramers as a dimer of dimers. When bound to the CI domain of KaiC switches to a monomeric thioredoxin-fold (KaiB(fs)). KaiB(fs) binds CikA, leading it to dephosphorylate phospho-RpaA.

Its function is as follows. Key component of the KaiABC oscillator complex, which constitutes the main circadian regulator in cyanobacteria. Complex composition changes during the circadian cycle to control KaiC phosphorylation. KaiA stimulates KaiC autophosphorylation, while KaiB sequesters KaiA, leading to KaiC autodephosphorylation. Phospho-Ser-431 KaiC accumulation triggers binding of KaiB to form the KaiB(6):KaiC(6) complex, leading to changes in output regulators CikA and SasA. KaiB switches to a thioredoxin-like fold (KaiB(fs)) when bound to KaiC. KaiB(6):KaiC(6) formation exposes a site for KaiA binding that sequesters KaiA from KaiC, making the KaiC(6):KaiB(6):KaiA(12) complex that results in KaiC autodephosphorylation. In terms of biological role, a metamorphic protein which reversibly switches between an inactive tetrameric fold and a rare, thioredoxin-like monomeric fold (KaiB(fs)). KaiB(fs) binds phospho-KaiC, KaiA and CikA. KaiA and CikA compete for binding to KaiB(fs), and KaiB(fs) and SasA compete for binding to KaiC, thus the clock oscillator and output signal pathway are tightly coupled. The protein is Circadian clock oscillator protein KaiB of Nostoc sp. (strain PCC 7120 / SAG 25.82 / UTEX 2576).